A 512-amino-acid polypeptide reads, in one-letter code: D-alanine--D-alanyl carrier protein ligase (512 aa).

152–153 (TS) lines the ATP pocket. D199 is a D-alanine binding site. ATP is bound at residue 294-299 (NAYGPT). V303 contacts D-alanine. ATP is bound by residues D385, 397–400 (YGGR), and K499. K499 provides a ligand contact to D-alanine.

It belongs to the ATP-dependent AMP-binding enzyme family. DltA subfamily.

The protein resides in the cytoplasm. The enzyme catalyses holo-[D-alanyl-carrier protein] + D-alanine + ATP = D-alanyl-[D-alanyl-carrier protein] + AMP + diphosphate. Its pathway is cell wall biogenesis; lipoteichoic acid biosynthesis. Catalyzes the first step in the D-alanylation of lipoteichoic acid (LTA), the activation of D-alanine and its transfer onto the D-alanyl carrier protein (Dcp) DltC. In an ATP-dependent two-step reaction, forms a high energy D-alanyl-AMP intermediate, followed by transfer of the D-alanyl residue as a thiol ester to the phosphopantheinyl prosthetic group of the Dcp. D-alanylation of LTA plays an important role in modulating the properties of the cell wall in Gram-positive bacteria, influencing the net charge of the cell wall. This Streptococcus pyogenes serotype M18 (strain MGAS8232) protein is D-alanine--D-alanyl carrier protein ligase.